A 314-amino-acid chain; its full sequence is Transcription factor TCP20 (314 aa).

Disordered stretches follow at residues 1–91 (MDPK…RGRR) and 295–314 (NHEE…GSGR). Composition is skewed to basic and acidic residues over residues 38–49 (DENRKPTTEIKD) and 77–89 (SNKD…EGRG). The region spanning 78-132 (NKDRHTKVEGRGRRIRMPALCAARIFQLTRELGHKSDGETIQWLLQQAEPSIIAA) is the TCP domain.

In terms of assembly, interacts with PURA1. Interacts with SPL.

It is found in the nucleus. Transcription factor that binds to the site II motif (3'-TGGGCC/T-5') in the promoter of PCNA-2 and to 3'-GCCCG/A-5' elements in the promoters of cyclin CYCB1-1 and ribosomal protein genes. The sequence is that of Transcription factor TCP20 (TCP20) from Arabidopsis thaliana (Mouse-ear cress).